Here is an 849-residue protein sequence, read N- to C-terminus: Probable ubiquitin carboxyl-terminal hydrolase 1 (849 aa).

In terms of domain architecture, DUSP spans Gln-20–Leu-120. The 570-residue stretch at Cys-279–Lys-848 folds into the USP domain. Catalysis depends on Cys-288, which acts as the Nucleophile. His-806 functions as the Proton acceptor in the catalytic mechanism.

Belongs to the peptidase C19 family.

It catalyses the reaction Thiol-dependent hydrolysis of ester, thioester, amide, peptide and isopeptide bonds formed by the C-terminal Gly of ubiquitin (a 76-residue protein attached to proteins as an intracellular targeting signal).. The protein is Probable ubiquitin carboxyl-terminal hydrolase 1 (ubp1) of Schizosaccharomyces pombe (strain 972 / ATCC 24843) (Fission yeast).